Consider the following 390-residue polypeptide: Phosphopentomutase (390 aa).

6 residues coordinate Mn(2+): D12, D284, H289, D325, H326, and H337.

This sequence belongs to the phosphopentomutase family. Mn(2+) serves as cofactor.

It is found in the cytoplasm. It catalyses the reaction 2-deoxy-alpha-D-ribose 1-phosphate = 2-deoxy-D-ribose 5-phosphate. It carries out the reaction alpha-D-ribose 1-phosphate = D-ribose 5-phosphate. Its pathway is carbohydrate degradation; 2-deoxy-D-ribose 1-phosphate degradation; D-glyceraldehyde 3-phosphate and acetaldehyde from 2-deoxy-alpha-D-ribose 1-phosphate: step 1/2. Functionally, isomerase that catalyzes the conversion of deoxy-ribose 1-phosphate (dRib-1-P) and ribose 1-phosphate (Rib-1-P) to deoxy-ribose 5-phosphate (dRib-5-P) and ribose 5-phosphate (Rib-5-P), respectively. This chain is Phosphopentomutase, found in Macrococcus caseolyticus (strain JCSC5402) (Macrococcoides caseolyticum).